The chain runs to 967 residues: A disintegrin and metalloproteinase with thrombospondin motifs 1 (967 aa).

The first 54 residues, 1 to 54 (MQPEVPLGSGKLKPCSDMGDIQRAAKFRSSQSAHMLLLLLASITMLLCVRGAHG), serve as a signal peptide directing secretion. The propeptide occupies 55 to 252 (RPTEEDEELV…TGPGSIRKKR (198 aa)). Residues 198–252 (RGSGGAKCGVMDEETLPTSNSGRESQNTPDQWPLRNPTPQGAGKPTGPGSIRKKR) are disordered. The Cysteine switch signature appears at 203 to 210 (AKCGVMDE). Zn(2+) is bound at residue Cys-205. Residues 213–227 (LPTSNSGRESQNTPD) show a composition bias toward polar residues. Residues 258 to 467 (RYVETMLVAD…GHGECLMDKP (210 aa)) enclose the Peptidase M12B domain. 3 residues coordinate Ca(2+): Glu-261, Asp-344, and Asp-351. 4 disulfide bridges follow: Cys-333–Cys-385, Cys-362–Cys-367, Cys-379–Cys-462, and Cys-417–Cys-446. His-401 contributes to the Zn(2+) binding site. The active site involves Glu-402. 2 residues coordinate Zn(2+): His-405 and His-411. Positions 462 and 465 each coordinate Ca(2+). The region spanning 476 to 558 (DLPGTLYDAN…TDMKHFATPV (83 aa)) is the Disintegrin domain. 4 disulfide bridges follow: Cys-488-Cys-511, Cys-499-Cys-521, Cys-506-Cys-540, and Cys-534-Cys-545. A glycan (N-linked (GlcNAc...) asparagine) is linked at Asn-547. The TSP type-1 1 domain occupies 559-614 (HGSWGPWGPWGDCSRTCGGGVQYTMRECDNPVPKNGGKYCEGKRVRYRSCNIEDCP). 3 disulfide bridges follow: Cys-571–Cys-608, Cys-575–Cys-613, and Cys-586–Cys-598. N-linked (GlcNAc...) asparagine glycans are attached at residues Asn-720, Asn-764, and Asn-782. The interval 725-857 (KKISGTVTST…PFNAIPTFSE (133 aa)) is spacer. 2 consecutive TSP type-1 domains span residues 854 to 910 (TFSE…LPCP) and 911 to 967 (RWQV…TQCS). Asn-945 is a glycosylation site (N-linked (GlcNAc...) asparagine).

Zn(2+) is required as a cofactor. Post-translationally, the precursor is cleaved by a furin endopeptidase. In terms of processing, glycosylated. Can be O-fucosylated by POFUT2 on a serine or a threonine residue found within the consensus sequence C1-X(2)-(S/T)-C2-G of the TSP type-1 repeat domains where C1 and C2 are the first and second cysteine residue of the repeat, respectively. Fucosylated repeats can then be further glycosylated by the addition of a beta-1,3-glucose residue by the glucosyltransferase, B3GALTL. Fucosylation mediates the efficient secretion of ADAMTS family members. Can also be C-glycosylated with one or two mannose molecules on tryptophan residues within the consensus sequence W-X-X-W of the TPRs, and N-glycosylated. These other glycosylations can also facilitate secretion.

The protein resides in the secreted. It is found in the extracellular space. Its subcellular location is the extracellular matrix. In terms of biological role, metalloprotease which cleaves aggrecan, a cartilage proteoglycan, at the '1683-Glu-|-Leu-1684' site (within the chondroitin sulfate attachment domain), and may be involved in its turnover. Also cleaves COMP. Has angiogenic inhibitor activity. May play a critical role in follicular rupture. The protein is A disintegrin and metalloproteinase with thrombospondin motifs 1 (Adamts1) of Rattus norvegicus (Rat).